The chain runs to 291 residues: N-acetylmannosamine kinase (291 aa).

Residues 5–12 and 132–139 each bind ATP; these read AIDIGGTK and GVGGGVVS. The Zn(2+) site is built by H156, C166, C168, and C173.

The protein belongs to the ROK (NagC/XylR) family. NanK subfamily. In terms of assembly, homodimer.

It catalyses the reaction an N-acyl-D-mannosamine + ATP = an N-acyl-D-mannosamine 6-phosphate + ADP + H(+). The protein operates within amino-sugar metabolism; N-acetylneuraminate degradation; D-fructose 6-phosphate from N-acetylneuraminate: step 2/5. Catalyzes the phosphorylation of N-acetylmannosamine (ManNAc) to ManNAc-6-P. This is N-acetylmannosamine kinase from Escherichia coli (strain SMS-3-5 / SECEC).